The primary structure comprises 416 residues: Fusaric acid cluster transcription factor FUB10 (416 aa).

Residues C16–C47 constitute a DNA-binding region (zn(2)-C6 fungal-type). The segment at S50–I92 is disordered. Positions R61–D73 are enriched in polar residues. The segment covering T74 to S86 has biased composition (low complexity).

The protein localises to the nucleus. Functionally, transcription factor that regulates the expression of the gene cluster that mediates the biosynthesis of fusaric acid, a mycotoxin with low to moderate toxicity to animals and humans, but with high phytotoxic properties. The polypeptide is Fusaric acid cluster transcription factor FUB10 (Fusarium oxysporum f. sp. lycopersici (strain 4287 / CBS 123668 / FGSC 9935 / NRRL 34936) (Fusarium vascular wilt of tomato)).